Consider the following 479-residue polypeptide: Aspartyl/glutamyl-tRNA(Asn/Gln) amidotransferase subunit B (479 aa).

It belongs to the GatB/GatE family. GatB subfamily. Heterotrimer of A, B and C subunits.

It catalyses the reaction L-glutamyl-tRNA(Gln) + L-glutamine + ATP + H2O = L-glutaminyl-tRNA(Gln) + L-glutamate + ADP + phosphate + H(+). It carries out the reaction L-aspartyl-tRNA(Asn) + L-glutamine + ATP + H2O = L-asparaginyl-tRNA(Asn) + L-glutamate + ADP + phosphate + 2 H(+). In terms of biological role, allows the formation of correctly charged Asn-tRNA(Asn) or Gln-tRNA(Gln) through the transamidation of misacylated Asp-tRNA(Asn) or Glu-tRNA(Gln) in organisms which lack either or both of asparaginyl-tRNA or glutaminyl-tRNA synthetases. The reaction takes place in the presence of glutamine and ATP through an activated phospho-Asp-tRNA(Asn) or phospho-Glu-tRNA(Gln). In Streptococcus pyogenes serotype M1, this protein is Aspartyl/glutamyl-tRNA(Asn/Gln) amidotransferase subunit B.